The following is a 344-amino-acid chain: DNA-directed RNA polymerase subunit alpha (344 aa).

Residues 1-246 form an alpha N-terminal domain (alpha-NTD) region; sequence MPVEKFLKDF…EFLFPLIDFE (246 aa). Positions 259-344 are alpha C-terminal domain (alpha-CTD); the sequence is ESSNLLDMSI…VLSKNVKISE (86 aa).

It belongs to the RNA polymerase alpha chain family. Homodimer. The RNAP catalytic core consists of 2 alpha, 1 beta, 1 beta' and 1 omega subunit. When a sigma factor is associated with the core the holoenzyme is formed, which can initiate transcription.

The enzyme catalyses RNA(n) + a ribonucleoside 5'-triphosphate = RNA(n+1) + diphosphate. Functionally, DNA-dependent RNA polymerase catalyzes the transcription of DNA into RNA using the four ribonucleoside triphosphates as substrates. The chain is DNA-directed RNA polymerase subunit alpha from Borrelia garinii subsp. bavariensis (strain ATCC BAA-2496 / DSM 23469 / PBi) (Borreliella bavariensis).